A 70-amino-acid chain; its full sequence is Frenatin 4.1 (70 aa).

A signal peptide spans 1 to 22 (MAFLKKSLFLVLFLGLVNLSIC). The propeptide occupies 23-46 (EEEKREEENKEEEDENEALSEVKR). Lys68 carries the lysine amide modification.

This sequence belongs to the frog skin active peptide (FSAP) family. Frenatin subfamily. Expressed by the skin glands.

It localises to the secreted. The protein resides in the target cell membrane. In terms of biological role, peptide with unknown function. Does not show antimicrobial activity against S.aureus (MIC&gt;512 ug/mL), E.coli (MIC&gt;512 ug/mL) and C.albicans (MIC&gt;512 ug/mL). Does not show hemolytic activity. Its function is as follows. Antimicrobial peptide with activity against E.coli (MIC=128 ug/mL or 54 uM) and C.albicans (MIC=256 ug/mL or 108 uM). Does not show activity against S.aureus (MIC&gt;512 ug/mL). Does not show hemolytic activity. The polypeptide is Frenatin 4.1 (Nyctimystes infrafrenatus (White-lipped tree frog)).